Consider the following 272-residue polypeptide: Testis-specific gene 13 protein (272 aa).

This is Testis-specific gene 13 protein (TSGA13) from Bos taurus (Bovine).